Here is a 117-residue protein sequence, read N- to C-terminus: Immunoglobulin heavy variable 4-4 (117 aa).

The first 19 residues, 1–19 (MKHLWFFLLLVAAPRWVLS), serve as a signal peptide directing secretion. Positions 20–44 (QVQLQESGPGLVKPSGTLSLTCAVS) are framework-1. Residues 20 to 117 (QVQLQESGPG…ADTAVYYCAR (98 aa)) form the Ig-like domain. Cysteines 41 and 115 form a disulfide. The interval 45–53 (GGSISSSNW) is complementarity-determining-1. The framework-2 stretch occupies residues 54–70 (WSWVRQPPGKGLEWIGE). Positions 71-77 (IYHSGST) are complementarity-determining-2. Residues 78–115 (NYNPSLKSRVTISVDKSKNQFSLKLSSVTAADTAVYYC) are framework-3. The complementarity-determining-3 stretch occupies residues 116-117 (AR).

Immunoglobulins are composed of two identical heavy chains and two identical light chains; disulfide-linked.

Its subcellular location is the secreted. It localises to the cell membrane. Its function is as follows. V region of the variable domain of immunoglobulin heavy chains that participates in the antigen recognition. Immunoglobulins, also known as antibodies, are membrane-bound or secreted glycoproteins produced by B lymphocytes. In the recognition phase of humoral immunity, the membrane-bound immunoglobulins serve as receptors which, upon binding of a specific antigen, trigger the clonal expansion and differentiation of B lymphocytes into immunoglobulins-secreting plasma cells. Secreted immunoglobulins mediate the effector phase of humoral immunity, which results in the elimination of bound antigens. The antigen binding site is formed by the variable domain of one heavy chain, together with that of its associated light chain. Thus, each immunoglobulin has two antigen binding sites with remarkable affinity for a particular antigen. The variable domains are assembled by a process called V-(D)-J rearrangement and can then be subjected to somatic hypermutations which, after exposure to antigen and selection, allow affinity maturation for a particular antigen. The polypeptide is Immunoglobulin heavy variable 4-4 (Homo sapiens (Human)).